The chain runs to 407 residues: Proline-rich P65 protein (407 aa).

Residues 1–50 (MDINKPGWNQSDQQATAYDPNQQQYYGDGSTYYDPDQAVDPNQAYYPDPN) form a disordered region. A compositionally biased stretch (polar residues) spans 7–25 (GWNQSDQQATAYDPNQQQY). A run of 12 repeats spans residues 40 to 45 (DPNQAY), 75 to 80 (DPNQAY), 83 to 87 (DPNAY), 89 to 93 (DPNAY), 95 to 99 (DPNAY), 101 to 105 (DPNAY), 107 to 111 (DPNAY), 119 to 123 (DPNAY), 140 to 145 (DPNQAY), 150 to 154 (DPNAY), 156 to 160 (DPNAY), and 170 to 174 (DHNAY). The interval 40–174 (DPNQAYYPDP…YVTSTDHNAY (135 aa)) is 12 X 5 AA repeats of D-P-N-Q-A-Y.

The N-terminus is blocked.

The protein resides in the cell membrane. The protein is Proline-rich P65 protein (p65) of Mycoplasmoides pneumoniae (strain ATCC 15531 / DSM 23978 / CIP 103766 / NBRC 14401 / NCTC 10119 / FH) (Mycoplasma pneumoniae).